Here is a 504-residue protein sequence, read N- to C-terminus: Maturase K (504 aa).

It belongs to the intron maturase 2 family. MatK subfamily.

It localises to the plastid. It is found in the chloroplast. Its function is as follows. Usually encoded in the trnK tRNA gene intron. Probably assists in splicing its own and other chloroplast group II introns. In Hamamelis mollis (Chinese witch hazel), this protein is Maturase K.